The primary structure comprises 187 residues: Ribosome-recycling factor (187 aa).

The protein belongs to the RRF family.

It localises to the cytoplasm. Functionally, responsible for the release of ribosomes from messenger RNA at the termination of protein biosynthesis. May increase the efficiency of translation by recycling ribosomes from one round of translation to another. This is Ribosome-recycling factor from Petrotoga mobilis (strain DSM 10674 / SJ95).